Consider the following 193-residue polypeptide: Putative manganese efflux pump MntP (193 aa).

The next 6 membrane-spanning stretches (helical) occupy residues 3–23 (LATLTVLGFSLSADAFAAALG), 39–59 (VGAYFGAFEAAAPLIGWALGL), 65–85 (IAAFDHWVAFTLLAGVGGHMV), 113–133 (LALAALATSIDATAVGIGLAV), 138–158 (ILMACALIGAITTVVAAGGVL), and 173–193 (VLGGLALIGIGLKILIEHLSA).

The protein belongs to the MntP (TC 9.B.29) family.

It is found in the cell inner membrane. Probably functions as a manganese efflux pump. In Rhodospirillum rubrum (strain ATCC 11170 / ATH 1.1.1 / DSM 467 / LMG 4362 / NCIMB 8255 / S1), this protein is Putative manganese efflux pump MntP.